Here is a 328-residue protein sequence, read N- to C-terminus: Malate dehydrogenase (328 aa).

11–17 (GAAGQIG) provides a ligand contact to NAD(+). Substrate is bound by residues Arg94 and Arg100. Residues Asn107, Gln114, and 131 to 133 (VGN) each bind NAD(+). The substrate site is built by Asn133 and Arg164. The active-site Proton acceptor is His189.

It belongs to the LDH/MDH superfamily. MDH type 2 family.

The enzyme catalyses (S)-malate + NAD(+) = oxaloacetate + NADH + H(+). Functionally, catalyzes the reversible oxidation of malate to oxaloacetate. This Xylella fastidiosa (strain M12) protein is Malate dehydrogenase.